A 231-amino-acid polypeptide reads, in one-letter code: Ribosomal RNA small subunit methyltransferase G (231 aa).

S-adenosyl-L-methionine is bound by residues Gly75, 125 to 126 (GE), and Arg140. Residues 204–213 (AEAEEGDSPE) show a composition bias toward acidic residues. A disordered region spans residues 204 to 231 (AEAEEGDSPEAADASRGVILELTKKNKG).

Belongs to the methyltransferase superfamily. RNA methyltransferase RsmG family.

Its subcellular location is the cytoplasm. In terms of biological role, specifically methylates the N7 position of a guanine in 16S rRNA. This is Ribosomal RNA small subunit methyltransferase G from Rhodopirellula baltica (strain DSM 10527 / NCIMB 13988 / SH1).